The chain runs to 259 residues: Truncated Ankyrin repeat protein OPG003 (259 aa).

The protein belongs to the orthopoxvirus OPG003 family.

In Vaccinia virus (strain Copenhagen) (VACV), this protein is Truncated Ankyrin repeat protein OPG003 (OPG003).